The following is a 782-amino-acid chain: Zinc finger Y-chromosomal protein 1 (782 aa).

Disordered stretches follow at residues 211–233 (ADLE…SKLD) and 360–386 (LNQD…ESKQ). Polar residues predominate over residues 217 to 229 (SEVTMNAESGTDS). Residues 372-382 (PKQKSKKKKRP) carry the Nuclear localization signal motif. The span at 373–382 (KQKSKKKKRP) shows a compositional bias: basic residues. 13 consecutive C2H2-type zinc fingers follow at residues 403–425 (YPCM…TKNH), 434–456 (YHCT…MESH), 466–488 (TECD…KTMH), 497–520 (CKCK…LVVH), 526–548 (HICG…IRVH), 554–577 (YECQ…KSKH), 583–605 (LKCG…AVLH), 611–634 (HQCS…ISVH), 640–662 (HKCD…VATH), 668–691 (HQCR…LSAH), 697–719 (FKCK…MKTH), 725–748 (YQCE…ISIH), and 754–777 (HSCD…MRHH).

The protein belongs to the krueppel C2H2-type zinc-finger protein family. ZFX/ZFY subfamily.

It is found in the nucleus. Its function is as follows. Probable transcriptional activator. Binds to the consensus sequence 5'-AGGCCY-3'. This Mus musculus (Mouse) protein is Zinc finger Y-chromosomal protein 1 (Zfy1).